Consider the following 746-residue polypeptide: Disintegrin and metalloproteinase domain-containing protein 18 (746 aa).

Residues 1-16 (MFFLLALLTELGRLQA) form the signal peptide. The propeptide occupies 17–183 (HVGSEGIFLH…QKKNLSKLLP (167 aa)). Asn-36, Asn-122, Asn-149, Asn-156, Asn-177, and Asn-294 each carry an N-linked (GlcNAc...) asparagine glycan. Topologically, residues 177–687 (NLSKLLPQYL…EKGYNAHWNN (511 aa)) are extracellular. The Peptidase M12B domain maps to 184–381 (QYLEIYIIVE…FEAKCLQKLS (198 aa)). Cystine bridges form between Cys-293/Cys-376, Cys-335/Cys-360, Cys-337/Cys-342, and Cys-450/Cys-471. N-linked (GlcNAc...) asparagine glycosylation is found at Asn-359, Asn-465, Asn-611, and Asn-625. Positions 390-479 (QPVCGNGILE…DCVPDTYALN (90 aa)) constitute a Disintegrin domain. Residues 620 to 654 (TGYNCNTTTKCKGKGICNNFGNCQCFPGHKPPDCK) enclose the EGF-like domain. Disulfide bonds link Cys-624/Cys-636, Cys-630/Cys-642, and Cys-644/Cys-653. The chain crosses the membrane as a helical span at residues 688–708 (WFILSFYIVLPFFIIFTIVIF). Residues 709-746 (KRNEIRKLCNRENTELIHPLYQKAMMWNINIAQNFRSK) lie on the Cytoplasmic side of the membrane.

The prodomain and the metalloprotease-like domain are cleaved during the epididymal maturation of the spermatozoa. Expressed predominantly in adult and prepubertal testis.

It is found in the membrane. Functionally, sperm surface membrane protein that may be involved in spermatogenesis and fertilization. This is a non catalytic metalloprotease-like protein. The chain is Disintegrin and metalloproteinase domain-containing protein 18 (ADAM18) from Macaca fascicularis (Crab-eating macaque).